Reading from the N-terminus, the 254-residue chain is Ribonuclease HII (254 aa).

Residues 70–254 (QAIAGIDEVG…TFEPVKSMLG (185 aa)) form the RNase H type-2 domain. A divalent metal cation-binding residues include Asp76, Glu77, and Asp168.

The protein belongs to the RNase HII family. Mn(2+) serves as cofactor. It depends on Mg(2+) as a cofactor.

Its subcellular location is the cytoplasm. The enzyme catalyses Endonucleolytic cleavage to 5'-phosphomonoester.. In terms of biological role, endonuclease that specifically degrades the RNA of RNA-DNA hybrids. This is Ribonuclease HII from Streptococcus gordonii (strain Challis / ATCC 35105 / BCRC 15272 / CH1 / DL1 / V288).